A 374-amino-acid chain; its full sequence is Glutamate 5-kinase (374 aa).

Lysine 17 is an ATP binding site. Serine 57, aspartate 144, and asparagine 156 together coordinate substrate. Residues 176-177 (SD) and 218-224 (TGGMVTK) contribute to the ATP site. One can recognise a PUA domain in the interval 280–358 (QGALVLDDGA…RELARELGPA (79 aa)).

The protein belongs to the glutamate 5-kinase family.

It is found in the cytoplasm. It catalyses the reaction L-glutamate + ATP = L-glutamyl 5-phosphate + ADP. It functions in the pathway amino-acid biosynthesis; L-proline biosynthesis; L-glutamate 5-semialdehyde from L-glutamate: step 1/2. In terms of biological role, catalyzes the transfer of a phosphate group to glutamate to form L-glutamate 5-phosphate. The sequence is that of Glutamate 5-kinase from Streptomyces coelicolor (strain ATCC BAA-471 / A3(2) / M145).